We begin with the raw amino-acid sequence, 235 residues long: MSRYLKHFTVVGDDPIQWSNDYQKWENEEEDNGEKDSEIKLEPSRGHVTFQDVMKKLFSSRRFQIVIVFLVIVDALLVLGELLMDLKIIHPDKYHIAPKVFHYLSLSILTIFLVEVGFKIFVYGREFFHHKFEVLDSIVVVVSFILDLVLLFREHEFEAVGLLILLRLWRVARIINGIILSVKTRSEQQVSKLKQVNLKLATKVEQLQHSCVEKEQEIERLTRMLKQHGLLSEQT.

Residues 1–62 (MSRYLKHFTV…VMKKLFSSRR (62 aa)) are Cytoplasmic-facing. The chain crosses the membrane as a helical span at residues 63–83 (FQIVIVFLVIVDALLVLGELL). Topologically, residues 84 to 100 (MDLKIIHPDKYHIAPKV) are extracellular. The helical transmembrane segment at 101–123 (FHYLSLSILTIFLVEVGFKIFVY) threads the bilayer. The Cytoplasmic portion of the chain corresponds to 124–131 (GREFFHHK). Residues 132–152 (FEVLDSIVVVVSFILDLVLLF) form a helical membrane-spanning segment. The Extracellular portion of the chain corresponds to 153-159 (REHEFEA). Residues 160-180 (VGLLILLRLWRVARIINGIIL) form a helical membrane-spanning segment. The Cytoplasmic segment spans residues 181–235 (SVKTRSEQQVSKLKQVNLKLATKVEQLQHSCVEKEQEIERLTRMLKQHGLLSEQT). Residues 187-228 (EQQVSKLKQVNLKLATKVEQLQHSCVEKEQEIERLTRMLKQH) are a coiled coil.

Belongs to the hydrogen channel family. In terms of assembly, homodimer.

It is found in the membrane. Its subcellular location is the cell membrane. Mediates the voltage-dependent proton permeability of excitable membranes. Forms a proton-selective channel through which protons may pass in accordance with their electrochemical gradient. The sequence is that of Voltage-gated hydrogen channel 1 (HVCN1) from Gallus gallus (Chicken).